A 466-amino-acid chain; its full sequence is Alpha-1A adrenergic receptor (466 aa).

Residues 1 to 25 (MVFLSGNASDSSNCTQPPAPVNIPK) are Extracellular-facing. Residues asparagine 7 and asparagine 13 are each glycosylated (N-linked (GlcNAc...) asparagine). Residues 26-51 (AILLGVILGVLILFGVPGNILVILSV) traverse the membrane as a helical segment. Topologically, residues 52 to 63 (ACHRHLHSVTHY) are cytoplasmic. Residues 64–89 (YIVNLAVADLLLTSTVLPFSAIFEIL) traverse the membrane as a helical segment. Residues 90 to 99 (GYWAFGRVFC) are Extracellular-facing. A helical transmembrane segment spans residues 100–122 (NIWAAVDVLCCTASIMSLCIISI). Residues 123–143 (DRYIGVSYPLRYPTIVTQRRG) are Cytoplasmic-facing. The helical transmembrane segment at 144-168 (LRALLCLWALSLVISIGPLFGWRQP) threads the bilayer. The Extracellular portion of the chain corresponds to 169–181 (APQDETICQINED). A helical transmembrane segment spans residues 182–205 (PSYVLFSALGSFYVPLAIILVMYC). Residues 206-272 (RVYVVAKRES…KFSREKKAAK (67 aa)) lie on the Cytoplasmic side of the membrane. Residues 273-297 (TLGIVVGCFVLCWLPFFLVMPIGSF) traverse the membrane as a helical segment. Topologically, residues 298–304 (FPDFKPS) are extracellular. The helical transmembrane segment at 305 to 329 (ETVFKIVFWLGYLNSCINPIIYPCS) threads the bilayer. Over 330 to 466 (SQEFKKAFQN…ISLSENGEEV (137 aa)) the chain is Cytoplasmic. The Nuclear localization signal motif lies at 334–349 (KKAFQNVLKIQCLRRK). A lipid anchor (S-palmitoyl cysteine) is attached at cysteine 345.

It belongs to the G-protein coupled receptor 1 family. Adrenergic receptor subfamily. ADRA1A sub-subfamily. In terms of assembly, homo- and heterooligomer. Heterooligomerizes with ADRA1B homooligomers in cardiac myocytes. Interacts with CAVIN4.

Its subcellular location is the nucleus membrane. The protein localises to the cell membrane. It localises to the cytoplasm. The protein resides in the membrane. It is found in the caveola. In terms of biological role, this alpha-adrenergic receptor mediates its action by association with G proteins that activate a phosphatidylinositol-calcium second messenger system. Its effect is mediated by G(q) and G(11) proteins. Nuclear ADRA1A-ADRA1B heterooligomers regulate phenylephrine (PE)-stimulated ERK signaling in cardiac myocytes. The protein is Alpha-1A adrenergic receptor (ADRA1A) of Cavia porcellus (Guinea pig).